Reading from the N-terminus, the 64-residue chain is Leader peptide SpeFL (64 aa).

An Ornithine recognition loop motif is present at residues 32-38 (HIRRTRH). L-ornithine is bound at residue Arg-35.

The protein belongs to the speF operon leader peptide family. As to quaternary structure, binds ornithine in stalled 70S ribosomes, blocking the upper two-thirds of the exit tunnel. Contacts 23S rRNA and ribosomal proteins L4 and L22.

Functionally, a small protein (arrest peptide) encoded upstream of inducible ornithine carboxylase gene (speF) that controls expression of downstream genes (usually speF and potE) by transcriptional and translational attenuation. The chain is Leader peptide SpeFL from Haemophilus influenzae (strain ATCC 51907 / DSM 11121 / KW20 / Rd).